A 38-amino-acid polypeptide reads, in one-letter code: Photosystem II reaction center protein L (38 aa).

A helical membrane pass occupies residues 17 to 37 (SLFWGLLLIFVLAVLFSNYFF).

The protein belongs to the PsbL family. PSII is composed of 1 copy each of membrane proteins PsbA, PsbB, PsbC, PsbD, PsbE, PsbF, PsbH, PsbI, PsbJ, PsbK, PsbL, PsbM, PsbT, PsbX, PsbY, PsbZ, Psb30/Ycf12, at least 3 peripheral proteins of the oxygen-evolving complex and a large number of cofactors. It forms dimeric complexes.

The protein localises to the plastid. It localises to the chloroplast thylakoid membrane. Its function is as follows. One of the components of the core complex of photosystem II (PSII). PSII is a light-driven water:plastoquinone oxidoreductase that uses light energy to abstract electrons from H(2)O, generating O(2) and a proton gradient subsequently used for ATP formation. It consists of a core antenna complex that captures photons, and an electron transfer chain that converts photonic excitation into a charge separation. This subunit is found at the monomer-monomer interface and is required for correct PSII assembly and/or dimerization. The chain is Photosystem II reaction center protein L from Chaetosphaeridium globosum (Charophycean green alga).